The primary structure comprises 350 residues: Probable peptidyl-alpha-hydroxyglycine alpha-amidating lyase pgal-1 (350 aa).

Residues 1–19 form the signal peptide; the sequence is MRASTACLVALLAPFYISA. One copy of the NHL 1 repeat lies at 46-90; it reads DRELIGLFNPSKEIGQVSGLAVNKNGHIVAFHRSGRVWDEKSFND. An N-linked (GlcNAc...) asparagine glycan is attached at Asn103. NHL repeat units lie at residues 113–154, 162–206, and 212–256; these read KKVI…IDAK, LGEK…FDAK, and QINA…FSAG. 2 disulfides stabilise this stretch: Cys176-Cys196 and Cys241-Cys252.

The protein belongs to the peptidyl-alpha-hydroxyglycine alpha-amidating lyase family. Zn(2+) is required as a cofactor.

The protein localises to the secreted. It carries out the reaction a [peptide]-C-terminal (2S)-2-hydroxyglycine = a [peptide]-C-terminal amide + glyoxylate. Probable lyase that catalyzes an essential reaction in C-terminal alpha-amidation of peptides. Mediates the dismutation of the unstable peptidyl(2-hydroxyglycine) intermediate to glyoxylate and the corresponding desglycine peptide amide. C-terminal amidation of peptides such as neuropeptides is essential for full biological activity. This Caenorhabditis elegans protein is Probable peptidyl-alpha-hydroxyglycine alpha-amidating lyase pgal-1.